The sequence spans 118 residues: Small ribosomal subunit protein uS13 (118 aa).

The interval 94–118 (SLPLRGQRTKTNARTRKGPRKPIKK) is disordered.

Belongs to the universal ribosomal protein uS13 family. Part of the 30S ribosomal subunit. Forms a loose heterodimer with protein S19. Forms two bridges to the 50S subunit in the 70S ribosome.

In terms of biological role, located at the top of the head of the 30S subunit, it contacts several helices of the 16S rRNA. In the 70S ribosome it contacts the 23S rRNA (bridge B1a) and protein L5 of the 50S subunit (bridge B1b), connecting the 2 subunits; these bridges are implicated in subunit movement. Contacts the tRNAs in the A and P-sites. This chain is Small ribosomal subunit protein uS13, found in Colwellia psychrerythraea (strain 34H / ATCC BAA-681) (Vibrio psychroerythus).